The following is a 769-amino-acid chain: Glutathione biosynthesis bifunctional protein GshAB (769 aa).

A glutamate--cysteine ligase region spans residues 1 to 347; sequence MLDSFKEDPN…QLADENENNI (347 aa). The region spanning 514–768 is the ATP-grasp domain; the sequence is KLVLAEHDIR…IGDKILDFLF (255 aa). Residue 541–599 participates in ATP binding; sequence SLFEDKQIVVKPKSTNYGWGISIFKNKFTLEDYQEALNIAFSYDSSVIIEEFIPGDEFR. Asp-721, Glu-738, and Asn-740 together coordinate Mg(2+). Positions 721, 738, and 740 each coordinate Mn(2+).

The protein in the N-terminal section; belongs to the glutamate--cysteine ligase type 1 family. Type 2 subfamily. Monomer. Mg(2+) is required as a cofactor. Mn(2+) serves as cofactor.

The enzyme catalyses L-cysteine + L-glutamate + ATP = gamma-L-glutamyl-L-cysteine + ADP + phosphate + H(+). The catalysed reaction is gamma-L-glutamyl-L-cysteine + glycine + ATP = glutathione + ADP + phosphate + H(+). The protein operates within sulfur metabolism; glutathione biosynthesis; glutathione from L-cysteine and L-glutamate: step 1/2. It functions in the pathway sulfur metabolism; glutathione biosynthesis; glutathione from L-cysteine and L-glutamate: step 2/2. Functionally, synthesizes glutathione from L-glutamate and L-cysteine via gamma-L-glutamyl-L-cysteine. In Listeria monocytogenes serovar 1/2a (strain ATCC BAA-679 / EGD-e), this protein is Glutathione biosynthesis bifunctional protein GshAB.